The chain runs to 1587 residues: DNA topoisomerase 2 (1587 aa).

Residues 1–15 are compositionally biased toward acidic residues; it reads MSDADPFDMSDDDDN. The tract at residues 1–47 is disordered; sequence MSDADPFDMSDDDDNSVLSHTPPKKQKKAPTTKKGGSKPLADVENES. Positions 22 to 31 are enriched in basic residues; sequence PPKKQKKAPT. ATP is bound by residues asparagine 126, asparagine 155, 183–185, and 196–203; these read SSN and GRNGFGAK. Interaction with DNA stretches follow at residues 381–383 and 381–386; these read KKK and KKKNKN. Residue 415–417 coordinates ATP; it reads QTK. The segment at 461–485 is disordered; the sequence is MLKKTDGGRRSRMNNPKLTDANKAG. The Toprim domain maps to 492 to 606; it reads CTLILTEGDS…SLLKIPEFLI (115 aa). 3 residues coordinate Mg(2+): glutamate 498, aspartate 575, and aspartate 577. One can recognise a Topo IIA-type catalytic domain in the interval 743–1190; that stretch reads IPSVVDGLKP…SKEDIWKRDL (448 aa). The active-site O-(5'-phospho-DNA)-tyrosine intermediate is tyrosine 833. The tract at residues 1016–1025 is interaction with DNA; that stretch reads KLSKTMTTTN. The tract at residues 1204 to 1587 is disordered; that stretch reads EARRQRKVAN…PRPRRPRRRS (384 aa). Positions 1271-1280 are enriched in low complexity; that stretch reads LSFLGKSSAK. A compositionally biased stretch (basic and acidic residues) spans 1308–1320; it reads PKSEPKADPKPKD. A compositionally biased stretch (acidic residues) spans 1321–1334; it reads EDEDIVMEDSDIEE. Basic and acidic residues predominate over residues 1348–1364; the sequence is VKPESEDGQAKIAEAPK. A compositionally biased stretch (basic residues) spans 1365 to 1375; the sequence is RGRAAAKPKPK. Composition is skewed to acidic residues over residues 1379–1391 and 1419–1430; these read EDEE…DDFM and SDSDSDNGDDLL. 2 stretches are compositionally biased toward polar residues: residues 1441–1451 and 1466–1475; these read GSTNGASTSDS and GLKTTASKAS. Over residues 1512 to 1521 the composition is skewed to acidic residues; that stretch reads DNEPEDDDDE. A compositionally biased stretch (low complexity) spans 1524-1542; the sequence is KPAAKGKAAAKGKSTAAAA. A compositionally biased stretch (pro residues) spans 1558 to 1568; sequence PKPPPRLPCPL. A compositionally biased stretch (basic residues) spans 1571–1587; the sequence is RRTHRSNPRPRRPRRRS.

It belongs to the type II topoisomerase family. As to quaternary structure, homodimer. Requires Mg(2+) as cofactor. Mn(2+) serves as cofactor. It depends on Ca(2+) as a cofactor.

The protein localises to the nucleus. The enzyme catalyses ATP-dependent breakage, passage and rejoining of double-stranded DNA.. Functionally, control of topological states of DNA by transient breakage and subsequent rejoining of DNA strands. Topoisomerase II makes double-strand breaks. In Penicillium chrysogenum (Penicillium notatum), this protein is DNA topoisomerase 2 (TOP2).